The sequence spans 524 residues: Phosphoenolpyruvate carboxykinase (ATP) (524 aa).

R52, Y188, and K194 together coordinate substrate. ATP-binding positions include K194, H213, and 229-237 (GLSGTGKTT). Mn(2+)-binding residues include K194 and H213. D250 provides a ligand contact to Mn(2+). The ATP site is built by E278, R314, and T439. R314 provides a ligand contact to substrate.

It belongs to the phosphoenolpyruvate carboxykinase (ATP) family. The cofactor is Mn(2+).

The protein resides in the cytoplasm. The enzyme catalyses oxaloacetate + ATP = phosphoenolpyruvate + ADP + CO2. It participates in carbohydrate biosynthesis; gluconeogenesis. In terms of biological role, involved in the gluconeogenesis. Catalyzes the conversion of oxaloacetate (OAA) to phosphoenolpyruvate (PEP) through direct phosphoryl transfer between the nucleoside triphosphate and OAA. This is Phosphoenolpyruvate carboxykinase (ATP) from Campylobacter jejuni subsp. jejuni serotype O:23/36 (strain 81-176).